The chain runs to 293 residues: Group 3 late-embryogenesis abundant protein, mitochondrial (293 aa).

A mitochondrion-targeting transit peptide spans 1–31; it reads MFLARNAGRAGYRGVVAYQQAASFSVSSAKA. The segment covering 27 to 43 has biased composition (low complexity); that stretch reads SSAKAAGSRSSGGSDAG. Positions 27 to 52 are disordered; it reads SSAKAAGSRSSGGSDAGDYAREAAEH. LEA 11-mer repeat repeat units lie at residues 58–68, 83–93, 123–133, 134–144, 145–155, 160–170, 171–181, 199–209, and 210–220; these read KDLKNEASWKA, KDTVKEGVHDM, KNAAQDTAATL, KDKAGSAWNQA, KHVVEDKGEDV, KDTASKVWGKA, KHVAEDVKENA, KDKAADVLSGA, and KHTAENLAHKA. The segment at 217-293 is disordered; it reads AHKAQAAIHD…KGPGQAGGRR (77 aa). Positions 230–265 are enriched in low complexity; sequence SSGSQSQSQSQSQYRQGQQQGRQDQQQSKSQWGQTS. A compositionally biased stretch (gly residues) spans 279 to 293; the sequence is GPQGGKGPGQAGGRR.

This sequence belongs to the LEA type 4 family.

It is found in the mitochondrion. In terms of biological role, mitochondrial heat soluble protein acting as a molecular shield in water-deficient condition. The chain is Group 3 late-embryogenesis abundant protein, mitochondrial from Ramazzottius varieornatus (Water bear).